The following is a 312-amino-acid chain: Polyamine aminopropyltransferase (312 aa).

A PABS domain is found at 7 to 247 (FFWVQEYFTP…GPLGFALAAQ (241 aa)). Position 36 (Q36) interacts with S-methyl-5'-thioadenosine. Spermidine is bound by residues H67 and E95. S-methyl-5'-thioadenosine is bound by residues D115 and 147–148 (DA). The Proton acceptor role is filled by D165. Position 174 (P174) interacts with S-methyl-5'-thioadenosine.

Belongs to the spermidine/spermine synthase family. As to quaternary structure, homodimer or homotetramer.

The protein resides in the cytoplasm. It catalyses the reaction S-adenosyl 3-(methylsulfanyl)propylamine + putrescine = S-methyl-5'-thioadenosine + spermidine + H(+). The protein operates within amine and polyamine biosynthesis; spermidine biosynthesis; spermidine from putrescine: step 1/1. Functionally, catalyzes the irreversible transfer of a propylamine group from the amino donor S-adenosylmethioninamine (decarboxy-AdoMet) to putrescine (1,4-diaminobutane) to yield spermidine. The protein is Polyamine aminopropyltransferase of Synechococcus sp. (strain JA-2-3B'a(2-13)) (Cyanobacteria bacterium Yellowstone B-Prime).